The following is a 1055-amino-acid chain: Inactive exonuclease DIS3L2 (1055 aa).

Disordered regions lie at residues 1-109 (MKSA…SSPE) and 229-249 (SAAK…KARQ). A compositionally biased stretch (basic residues) spans 17-32 (HKKKRNRPQKQNRRSK). Residues 39-59 (EDAHVEESLDGRDSSRSKAKD) show a composition bias toward basic and acidic residues. Over residues 97–108 (PRRSASPLLSSP) the composition is skewed to low complexity. In terms of domain architecture, CSD2 spans 367–446 (YVQLMPADPR…PQINAILYQN (80 aa)). The 349-residue stretch at 476-824 (RKDLRDLCVL…VHRALAAALE (349 aa)) folds into the RNB domain. Residues aspartate 488 and aspartate 497 each coordinate Mg(2+).

Belongs to the RNR ribonuclease family. DIS3L2 subfamily.

It is found in the cytoplasm. In terms of biological role, probable inactive 3'-5'-exoribonuclease. Is unable to complement the growth defect of a yeast mutant lacking RRP44 exonuclease. In Arabidopsis thaliana (Mouse-ear cress), this protein is Inactive exonuclease DIS3L2.